The following is a 504-amino-acid chain: Cytochrome P450 2S1 (504 aa).

Heme is bound at residue cysteine 440.

The protein belongs to the cytochrome P450 family. It depends on heme as a cofactor. In terms of tissue distribution, expressed at higher levels in extrahepatic tissues including trachea, lung, stomach, small intestine, colon, kidney, breast, placenta and spleen. Expressed in peripheral blood leukocytes. Constitutively expressed in skin (at protein level).

The protein localises to the endoplasmic reticulum membrane. Its subcellular location is the microsome membrane. It carries out the reaction all-trans-retinoate + reduced [NADPH--hemoprotein reductase] + O2 = all-trans-5,6-epoxyretinoate + oxidized [NADPH--hemoprotein reductase] + H2O + H(+). The catalysed reaction is all-trans-retinoate + reduced [NADPH--hemoprotein reductase] + O2 = all-trans-4-hydroxyretinoate + oxidized [NADPH--hemoprotein reductase] + H2O + H(+). It catalyses the reaction (5S)-hydroperoxy-(6E,8Z,11Z,14Z)-eicosatetraenoate = 5-oxo-(6E,8Z,11Z,14Z)-eicosatetraenoate + H2O. The enzyme catalyses (12S)-hydroperoxy-(5Z,8Z,10E,14Z)-eicosatetraenoate = 12-oxo-(5Z,8Z,10E,14Z)-eicosatetraenoate + H2O. It carries out the reaction (15S)-hydroperoxy-(5Z,8Z,11Z,13E)-eicosatetraenoate = 15-oxo-(5Z,8Z,11Z,13E)-eicosatetraenoate + H2O. The catalysed reaction is prostaglandin H2 = thromboxane A2. It catalyses the reaction prostaglandin H2 = (12S)-hydroxy-(5Z,8E,10E)-heptadecatrienoate + malonaldehyde. The enzyme catalyses (13S)-hydroperoxy-(9Z,11E)-octadecadienoate = 13-oxo-(9Z,11E)-octadecadienoate + H2O. Its pathway is lipid metabolism; fatty acid metabolism. Its function is as follows. A cytochrome P450 monooxygenase involved in the metabolism of retinoids and eicosanoids. In epidermis, may contribute to the oxidative metabolism of all-trans-retinoic acid. For this activity, uses molecular oxygen inserting one oxygen atom into a substrate, and reducing the second into a water molecule, with two electrons provided by NADPH via cytochrome P450 reductase (NADPH--hemoprotein reductase). Additionally, displays peroxidase and isomerase activities toward various oxygenated eicosanoids such as prostaglandin H2 (PGH2) and hydroperoxyeicosatetraenoates (HPETEs). Independently of cytochrome P450 reductase, NADPH, and O2, catalyzes the breakdown of PGH2 to hydroxyheptadecatrienoic acid (HHT) and malondialdehyde (MDA), which is known to act as a mediator of DNA damage. The protein is Cytochrome P450 2S1 of Homo sapiens (Human).